The sequence spans 99 residues: NADH-quinone oxidoreductase subunit K (99 aa).

The next 3 membrane-spanning stretches (helical) occupy residues Pro3–Leu23, Ile28–Phe48, and Val59–Ile79.

It belongs to the complex I subunit 4L family. NDH-1 is composed of 14 different subunits. Subunits NuoA, H, J, K, L, M, N constitute the membrane sector of the complex.

Its subcellular location is the cell membrane. It catalyses the reaction a quinone + NADH + 5 H(+)(in) = a quinol + NAD(+) + 4 H(+)(out). In terms of biological role, NDH-1 shuttles electrons from NADH, via FMN and iron-sulfur (Fe-S) centers, to quinones in the respiratory chain. The immediate electron acceptor for the enzyme in this species is believed to be a menaquinone. Couples the redox reaction to proton translocation (for every two electrons transferred, four hydrogen ions are translocated across the cytoplasmic membrane), and thus conserves the redox energy in a proton gradient. The chain is NADH-quinone oxidoreductase subunit K from Mycolicibacterium gilvum (strain PYR-GCK) (Mycobacterium gilvum (strain PYR-GCK)).